Here is a 373-residue protein sequence, read N- to C-terminus: Protein-glutamate methylesterase/protein-glutamine glutaminase 2 (373 aa).

The Response regulatory domain occupies 4 to 121; the sequence is KVLVVDDSGF…SRNPEKVKQL (118 aa). D55 is subject to 4-aspartylphosphate. The tract at residues 136 to 181 is disordered; sequence FSSYSAPAPQPASAPAPAPSSFASSRSPAPAPAPARAAAPAASANS. Residues 143–153 show a composition bias toward pro residues; sequence APQPASAPAPA. A compositionally biased stretch (low complexity) spans 154-181; sequence PSSFASSRSPAPAPAPARAAAPAASANS. A CheB-type methylesterase domain is found at 182 to 370; it reads PAPKRKAYKL…LDDIGRHLVE (189 aa). Residues S197, H224, and D317 contribute to the active site.

The protein belongs to the CheB family. In terms of processing, phosphorylated by CheA. Phosphorylation of the N-terminal regulatory domain activates the methylesterase activity.

Its subcellular location is the cytoplasm. The enzyme catalyses [protein]-L-glutamate 5-O-methyl ester + H2O = L-glutamyl-[protein] + methanol + H(+). It catalyses the reaction L-glutaminyl-[protein] + H2O = L-glutamyl-[protein] + NH4(+). Functionally, involved in chemotaxis. Part of a chemotaxis signal transduction system that modulates chemotaxis in response to various stimuli. Catalyzes the demethylation of specific methylglutamate residues introduced into the chemoreceptors (methyl-accepting chemotaxis proteins or MCP) by CheR. Also mediates the irreversible deamidation of specific glutamine residues to glutamic acid. The sequence is that of Protein-glutamate methylesterase/protein-glutamine glutaminase 2 from Pseudomonas fluorescens (strain ATCC BAA-477 / NRRL B-23932 / Pf-5).